Here is a 98-residue protein sequence, read N- to C-terminus: UPF0213 protein LACR_2011 (98 aa).

The 78-residue stretch at Asn-2–Leu-79 folds into the GIY-YIG domain.

Belongs to the UPF0213 family.

This chain is UPF0213 protein LACR_2011, found in Lactococcus lactis subsp. cremoris (strain SK11).